We begin with the raw amino-acid sequence, 130 residues long: Ribosome-binding factor A (130 aa).

The interval 111 to 130 (RDLDDVGPEATSSDEDAEQR) is disordered.

This sequence belongs to the RbfA family. Monomer. Binds 30S ribosomal subunits, but not 50S ribosomal subunits or 70S ribosomes.

Its subcellular location is the cytoplasm. Its function is as follows. One of several proteins that assist in the late maturation steps of the functional core of the 30S ribosomal subunit. Associates with free 30S ribosomal subunits (but not with 30S subunits that are part of 70S ribosomes or polysomes). Required for efficient processing of 16S rRNA. May interact with the 5'-terminal helix region of 16S rRNA. The sequence is that of Ribosome-binding factor A from Xanthomonas axonopodis pv. citri (strain 306).